Here is a 49-residue protein sequence, read N- to C-terminus: Large ribosomal subunit protein eL40 (49 aa).

It belongs to the eukaryotic ribosomal protein eL40 family.

The chain is Large ribosomal subunit protein eL40 from Methanosarcina acetivorans (strain ATCC 35395 / DSM 2834 / JCM 12185 / C2A).